The sequence spans 407 residues: MVASAAARPLVTVQGLDGDMSTDQSTTVTLPDVMTAPVRPDIVNFVHAQISNNSRQPYAVSKKAGHQTSAESWGTGRAVSRIPRVPGGGTHRAGQAAFGNMCRGGRMFAPTKIWRRWHRRVNVNMKRHAIVSAIAATAVPALVMARGHKIENVPEMPLVVSDSAEAVEKTSAAIKVLKQIGAYDDAEKAKNSIGIRPGKGKMRNRRYISRKGPLVVFGTEGAKIVKAFRNLPGVELCHVERLNLLKLAPGGHLGRFVIWTKSAFEKLESIYGSFEKPSEKKKGYVLPRAKMVNADLARIINSDEVQSVVNPIKDGSKRAVLKKNPLKNLNVMFKLNPYAKTAKRMSLLAEASRVKAKKEKLEKKRKVVTKEEAQAIKAAGKAWYQTMISDSDYTEFDNFTKWLGASQ.

The tract at residues 57 to 96 (PYAVSKKAGHQTSAESWGTGRAVSRIPRVPGGGTHRAGQA) is disordered.

Belongs to the universal ribosomal protein uL4 family.

This chain is Large ribosomal subunit protein uL4y (RPL4D), found in Arabidopsis thaliana (Mouse-ear cress).